The primary structure comprises 338 residues: ATPase GET3 (338 aa).

33–40 (KGGVGKTT) is an ATP binding site. Residue aspartate 62 is part of the active site. Residues glutamate 242 and asparagine 269 each coordinate ATP. Cysteine 280 and cysteine 283 together coordinate Zn(2+).

It belongs to the arsA ATPase family. Homodimer.

Its subcellular location is the cytoplasm. It localises to the endoplasmic reticulum. In terms of biological role, ATPase required for the post-translational delivery of tail-anchored (TA) proteins to the endoplasmic reticulum. Recognizes and selectively binds the transmembrane domain of TA proteins in the cytosol. This complex then targets to the endoplasmic reticulum by membrane-bound receptors, where the tail-anchored protein is released for insertion. This process is regulated by ATP binding and hydrolysis. ATP binding drives the homodimer towards the closed dimer state, facilitating recognition of newly synthesized TA membrane proteins. ATP hydrolysis is required for insertion. Subsequently, the homodimer reverts towards the open dimer state, lowering its affinity for the membrane-bound receptor, and returning it to the cytosol to initiate a new round of targeting. In Uncinocarpus reesii (strain UAMH 1704), this protein is ATPase GET3.